The sequence spans 190 residues: Hypoxanthine/guanine phosphoribosyltransferase (190 aa).

Belongs to the purine/pyrimidine phosphoribosyltransferase family. Archaeal HPRT subfamily. As to quaternary structure, homodimer.

It is found in the cytoplasm. The enzyme catalyses IMP + diphosphate = hypoxanthine + 5-phospho-alpha-D-ribose 1-diphosphate. It catalyses the reaction GMP + diphosphate = guanine + 5-phospho-alpha-D-ribose 1-diphosphate. It functions in the pathway purine metabolism; IMP biosynthesis via salvage pathway; IMP from hypoxanthine: step 1/1. In terms of biological role, catalyzes a salvage reaction resulting in the formation of IMP that is energically less costly than de novo synthesis. The protein is Hypoxanthine/guanine phosphoribosyltransferase of Methanohalobium evestigatum (strain ATCC BAA-1072 / DSM 3721 / NBRC 107634 / OCM 161 / Z-7303).